A 247-amino-acid chain; its full sequence is Segregation and condensation protein A (247 aa).

The protein belongs to the ScpA family. Component of a cohesin-like complex composed of ScpA, ScpB and the Smc homodimer, in which ScpA and ScpB bind to the head domain of Smc. The presence of the three proteins is required for the association of the complex with DNA.

The protein localises to the cytoplasm. Participates in chromosomal partition during cell division. May act via the formation of a condensin-like complex containing Smc and ScpB that pull DNA away from mid-cell into both cell halves. The chain is Segregation and condensation protein A from Mycoplasma mobile (strain ATCC 43663 / 163K / NCTC 11711) (Mesomycoplasma mobile).